Reading from the N-terminus, the 1337-residue chain is Sister chromatid cohesion protein PDS5 homolog A (1337 aa).

The residue at position 1 (Met-1) is an N-acetylmethionine. One copy of the HEAT repeat lies at 393–429 (ALVNDQLLGFVRERTLDKRWRVRKEAMMGLAQLYKKY). At Ser-1097 the chain carries Phosphoserine. Lys-1146 carries the N6-acetyllysine modification. The tract at residues 1150 to 1337 (ATGRKPYVRS…PAERQIDLQR (188 aa)) is disordered. Polar residues predominate over residues 1159 to 1180 (STGTETGSNINVNSELNPSTGN). Ser-1195 is modified (phosphoserine). Position 1208 is a phosphothreonine (Thr-1208). Position 1211 is an N6-acetyllysine (Lys-1211). Positions 1223-1233 (SDQATQGNISS) are enriched in polar residues. Residue Lys-1290 is modified to N6-acetyllysine. Phosphoserine is present on Ser-1305. A compositionally biased stretch (basic and acidic residues) spans 1321-1337 (DLAKKAAPAERQIDLQR).

It belongs to the PDS5 family. Interacts with the cohesin complex. Interacts with WAPL (via FGF motifs) or CDCA5 (via the FGF motif); the interaction is direct, cohesin-dependent and competitive. Interacts with SMC3. Interacts with TP63. Highest level in colon. Low levels in lung, ovary, breast and kidney. Reduced level in renal tumor tissue. Isoform 2 is expressed in kidney.

It is found in the nucleus. Its function is as follows. Probable regulator of sister chromatid cohesion in mitosis which may stabilize cohesin complex association with chromatin. May couple sister chromatid cohesion during mitosis to DNA replication. Cohesion ensures that chromosome partitioning is accurate in both meiotic and mitotic cells and plays an important role in DNA repair. The chain is Sister chromatid cohesion protein PDS5 homolog A from Homo sapiens (Human).